Reading from the N-terminus, the 306-residue chain is Homoserine kinase (306 aa).

ATP is bound at residue 95–105 (PHSRGLGSSAA).

It belongs to the GHMP kinase family. Homoserine kinase subfamily.

The protein resides in the cytoplasm. It carries out the reaction L-homoserine + ATP = O-phospho-L-homoserine + ADP + H(+). Its pathway is amino-acid biosynthesis; L-threonine biosynthesis; L-threonine from L-aspartate: step 4/5. Catalyzes the ATP-dependent phosphorylation of L-homoserine to L-homoserine phosphate. This chain is Homoserine kinase, found in Mycobacteroides abscessus (strain ATCC 19977 / DSM 44196 / CCUG 20993 / CIP 104536 / JCM 13569 / NCTC 13031 / TMC 1543 / L948) (Mycobacterium abscessus).